We begin with the raw amino-acid sequence, 566 residues long: MEHLFDYVGHFGRFQAYLYFASAFQTISCGIHYLASVFIAVTPKFICRAPGNISTVLLPNASTLRLEDAWESWTSKDYLVVQQENGDIWELNQCSRLKREDASYLTYFYDGNKTLFSCSNGYHYDKSNLESSIVTEWDLVCDREWLAKLIQPIFMLGVLIGAVIFGDIADRVGRRPIIWITSTGQFLFGIAVAFTFDYYSFVIVRFLLAMVSSGYYVVVFVYLTEYVGIKARTWASMHVHAFFAVGVMIVSLVGFLVRTWWIYQIILSLTTLPFVLCCWMLPETPFWLYSQGKYKEVEKLIRTIEKWNKISTPCKLSELCPAQETHVDQPNTLKNHNVLDLFYNWSFARRTITVWLIWFTGSLGYYVFALNSVNLGGNEYLNLFLTGAVEIPSYIVACLGMDKIGRRNTLAPFLIISAVICGVIMLIPQDHSTVTIAMSMAGKFSIAVAFGLIYLYTAELYPTIVRSLAVGSGSMMCRIGSVVAPFCVYLTDVWIFMPQMLVGIMAFLTGILTLTLPETLGIPLTSTMEEAAEMGTTSGITKRKALTESNGVVMEKLDQTTDNAAS.

The chain crosses the membrane as a helical span at residues 20-40; that stretch reads FASAFQTISCGIHYLASVFIA. N-linked (GlcNAc...) asparagine glycans are attached at residues N52, N60, and N112. The next 5 helical transmembrane spans lie at 149–169, 176–196, 201–221, 237–257, and 261–281; these read LIQP…GDIA, PIIW…AFTF, FVIV…VVFV, MHVH…GFLV, and WIYQ…CWML. N344 carries N-linked (GlcNAc...) asparagine glycosylation. 6 helical membrane passes run 351–371, 381–401, 408–428, 436–456, 468–488, and 493–513; these read TITV…FALN, LNLF…CLGM, NTLA…MLIP, IAMS…IYLY, LAVG…PFCV, and VWIF…GILT.

This sequence belongs to the major facilitator (TC 2.A.1) superfamily. Organic cation transporter (TC 2.A.1.19) family.

It localises to the membrane. Functionally, high affinity carnitine transporter. This Xenopus laevis (African clawed frog) protein is Solute carrier family 22 member 16 (slc22a16).